A 251-amino-acid chain; its full sequence is uncharacterized protein (251 aa).

A run of 4 helical transmembrane segments spans residues 56–76 (LAVVIAQLTIGVLGNSLTLVA), 104–124 (IITVGITNVILFLLFVAFLLT), 184–204 (HGFVYHFIAYFVLVSSLLIIV), and 208–228 (YLIADVITTYATSLLILANIS).

It localises to the membrane. This is an uncharacterized protein from Caenorhabditis elegans.